The sequence spans 853 residues: DNA mismatch repair protein MutS (853 aa).

An ATP-binding site is contributed by 614–621; the sequence is GPNMGGKS.

The protein belongs to the DNA mismatch repair MutS family.

In terms of biological role, this protein is involved in the repair of mismatches in DNA. It is possible that it carries out the mismatch recognition step. This protein has a weak ATPase activity. This is DNA mismatch repair protein MutS from Escherichia coli O1:K1 / APEC.